A 460-amino-acid polypeptide reads, in one-letter code: Probable Xaa-Pro aminopeptidase PEPP (460 aa).

4 residues coordinate Mn(2+): aspartate 256, aspartate 267, glutamate 390, and glutamate 430.

It belongs to the peptidase M24B family. The cofactor is Mn(2+).

It carries out the reaction Release of any N-terminal amino acid, including proline, that is linked to proline, even from a dipeptide or tripeptide.. In terms of biological role, catalyzes the removal of a penultimate prolyl residue from the N-termini of peptides. The protein is Probable Xaa-Pro aminopeptidase PEPP (PEPP) of Podospora anserina (strain S / ATCC MYA-4624 / DSM 980 / FGSC 10383) (Pleurage anserina).